A 229-amino-acid polypeptide reads, in one-letter code: DNA mismatch repair protein MutH (229 aa).

The protein belongs to the MutH family.

The protein resides in the cytoplasm. Functionally, sequence-specific endonuclease that cleaves unmethylated GATC sequences. It is involved in DNA mismatch repair. This chain is DNA mismatch repair protein MutH, found in Shigella dysenteriae serotype 1 (strain Sd197).